Consider the following 110-residue polypeptide: Thiosulfate sulfurtransferase GlpE (110 aa).

A Rhodanese domain is found at 17-105 (RENGAQVVDI…WRSVYPADTS (89 aa)). The active-site Cysteine persulfide intermediate is the cysteine 65.

It belongs to the GlpE family.

The protein localises to the cytoplasm. The catalysed reaction is thiosulfate + hydrogen cyanide = thiocyanate + sulfite + 2 H(+). The enzyme catalyses thiosulfate + [thioredoxin]-dithiol = [thioredoxin]-disulfide + hydrogen sulfide + sulfite + 2 H(+). Functionally, transferase that catalyzes the transfer of sulfur from thiosulfate to thiophilic acceptors such as cyanide or dithiols. May function in a CysM-independent thiosulfate assimilation pathway by catalyzing the conversion of thiosulfate to sulfite, which can then be used for L-cysteine biosynthesis. This is Thiosulfate sulfurtransferase GlpE from Pseudomonas aeruginosa (strain ATCC 15692 / DSM 22644 / CIP 104116 / JCM 14847 / LMG 12228 / 1C / PRS 101 / PAO1).